A 324-amino-acid polypeptide reads, in one-letter code: Delta-aminolevulinic acid dehydratase (324 aa).

Residues cysteine 120, cysteine 122, and cysteine 130 each contribute to the Zn(2+) site. Lysine 195 (schiff-base intermediate with substrate) is an active-site residue. 5-aminolevulinate-binding residues include arginine 205 and arginine 217. Residue glutamate 233 coordinates Mg(2+). The active-site Schiff-base intermediate with substrate is lysine 248. Residues serine 274 and tyrosine 313 each contribute to the 5-aminolevulinate site.

Belongs to the ALAD family. In terms of assembly, homooctamer. It depends on Zn(2+) as a cofactor.

It carries out the reaction 2 5-aminolevulinate = porphobilinogen + 2 H2O + H(+). Its pathway is porphyrin-containing compound metabolism; protoporphyrin-IX biosynthesis; coproporphyrinogen-III from 5-aminolevulinate: step 1/4. Its function is as follows. Catalyzes an early step in the biosynthesis of tetrapyrroles. Binds two molecules of 5-aminolevulinate per subunit, each at a distinct site, and catalyzes their condensation to form porphobilinogen. This Bacillus subtilis (strain 168) protein is Delta-aminolevulinic acid dehydratase (hemB).